Consider the following 270-residue polypeptide: Undecaprenyl-diphosphatase 1 (270 aa).

Transmembrane regions (helical) follow at residues 79-99 (NLLLGIVIAFIPAAVAGLLFS), 105-125 (VLFNPVCVAIAFIVGGLIILW), 155-175 (LALIPGTSRSGATIIGGLFLG), 182-202 (TEFSFFLGIPTLGAASLYSLI), 215-235 (VFAVGFIASFVFAFLAIRALL), and 242-262 (SFAVFAWYRIAFGLIVLGTWW).

Belongs to the UppP family.

Its subcellular location is the cell inner membrane. It catalyses the reaction di-trans,octa-cis-undecaprenyl diphosphate + H2O = di-trans,octa-cis-undecaprenyl phosphate + phosphate + H(+). Its function is as follows. Catalyzes the dephosphorylation of undecaprenyl diphosphate (UPP). Confers resistance to bacitracin. The polypeptide is Undecaprenyl-diphosphatase 1 (Chromobacterium violaceum (strain ATCC 12472 / DSM 30191 / JCM 1249 / CCUG 213 / NBRC 12614 / NCIMB 9131 / NCTC 9757 / MK)).